The chain runs to 270 residues: MNKILRGVIQFRNTIRKDLVKQFEEIKNNPSPTAVMFTCMDSRMLPTRFTQSQVGDMFVVRNAGNMIPDAPNYGAFSEVSVNTEPAALELAVKRGGIRHIVVCGHSDCKAINTLYGLHQCPKNFDVTSPMDHWVRRNGFASVKRLNERLHRGPSSMKFESEVAPSQSFDAIIDPMDTLAMEDKLSQINVLQQLINICSHEFLKEYLESGRLHIHGMWFDIYKGEDYLFSKDKKRFVVIDEKTVTDLLAELNARYPVPEDQDGPVAFAKSN.

Zn(2+) is bound by residues Cys-39, Asp-41, His-105, and Cys-108.

This sequence belongs to the beta-class carbonic anhydrase family. Oligomer. It depends on Zn(2+) as a cofactor.

It catalyses the reaction hydrogencarbonate + H(+) = CO2 + H2O. Its function is as follows. Reversible hydration of carbon dioxide. This is Beta carbonic anhydrase 1 (bca-1) from Caenorhabditis elegans.